The chain runs to 230 residues: tRNA (guanine-N(7)-)-methyltransferase (230 aa).

Residues Glu-61, Glu-86, Asp-113, and Asp-135 each contribute to the S-adenosyl-L-methionine site. Asp-135 is a catalytic residue. Substrate-binding positions include Lys-139, Asp-171, and 209–212; that span reads TRYE.

This sequence belongs to the class I-like SAM-binding methyltransferase superfamily. TrmB family.

The catalysed reaction is guanosine(46) in tRNA + S-adenosyl-L-methionine = N(7)-methylguanosine(46) in tRNA + S-adenosyl-L-homocysteine. It functions in the pathway tRNA modification; N(7)-methylguanine-tRNA biosynthesis. Functionally, catalyzes the formation of N(7)-methylguanine at position 46 (m7G46) in tRNA. This chain is tRNA (guanine-N(7)-)-methyltransferase, found in Azorhizobium caulinodans (strain ATCC 43989 / DSM 5975 / JCM 20966 / LMG 6465 / NBRC 14845 / NCIMB 13405 / ORS 571).